The following is a 200-amino-acid chain: Eukaryotic translation initiation factor isoform 4E (200 aa).

The tract at residues 1 to 22 (MATEAPIEATEVPPASATETVA) is disordered. Residues 44–49 (QGAAWG), lysine 76, and 94–95 (WE) each bind mRNA. The cysteines at positions 99 and 138 are disulfide-linked. Residues 145 to 150 (RRSQDK) and 189 to 192 (KRER) contribute to the mRNA site.

The protein belongs to the eukaryotic initiation factor 4E family. In terms of assembly, EIF4F is a multi-subunit complex, the composition of which varies with external and internal environmental conditions. It is composed of at least EIF4A, EIF4E and EIF4G. EIF4E is also known to interact with other partners. In higher plants two isoforms of EIF4F have been identified, named isoform EIF4F and isoform EIF(iso)4F. Isoform EIF4F has subunits p220 and p26, whereas isoform EIF(iso)4F has subunits p82 and p28. As to quaternary structure, (Microbial infection) Interacts with viral genome-linked protein (VPg); this interaction is possible in susceptible hosts but impaired in resistant plants. According to the redox status, the Cys-99-Cys-138 disulfide bridge may have a role in regulating protein function by affecting its ability to bind capped mRNA. As to expression, expressed ubiquitously in seedlings, roots, leaves, sepals, petals, anthers and dehisced pollen, with highest levels in pollen, maturing anthers and roots. Strongly expressed in susceptible plants but not in resistant ones.

It localises to the cytoplasm. The protein resides in the nucleus. Functionally, component of the protein complex eIF4F, which is involved in the recognition of the mRNA cap, ATP-dependent unwinding of 5'-terminal secondary structure and recruitment of mRNA to the ribosome. Recognizes and binds the 7-methylguanosine-containing mRNA cap during an early step in the initiation of protein synthesis and facilitates ribosome binding by inducing the unwinding of the mRNAs secondary structures. Key component of recessive resistance to potyviruses. In terms of biological role, (Microbial infection) Susceptibility host factor required for viral infection (e.g. potato virus Y (PVY) and pepper mottle virus (PepMoV)) by recruiting viral RNAs to the host ribosomal complex via an interaction with viral genome-linked protein (VPg). The chain is Eukaryotic translation initiation factor isoform 4E from Nicotiana tabacum (Common tobacco).